The primary structure comprises 448 residues: Trigger factor (448 aa).

Residues 172-257 (GDRVTVDFVG…MKKIEWPHLP (86 aa)) form the PPIase FKBP-type domain.

It belongs to the FKBP-type PPIase family. Tig subfamily.

It is found in the cytoplasm. The catalysed reaction is [protein]-peptidylproline (omega=180) = [protein]-peptidylproline (omega=0). In terms of biological role, involved in protein export. Acts as a chaperone by maintaining the newly synthesized protein in an open conformation. Functions as a peptidyl-prolyl cis-trans isomerase. The protein is Trigger factor of Burkholderia ambifaria (strain ATCC BAA-244 / DSM 16087 / CCUG 44356 / LMG 19182 / AMMD) (Burkholderia cepacia (strain AMMD)).